Reading from the N-terminus, the 306-residue chain is Putative F-box protein At1g47300 (306 aa).

The F-box domain maps to 1 to 45; it reads MISDSIPKELILEIMLRLPAKSIARFHCVSKQWASMLSRPYFTEL. Positions 235–278 are disordered; the sequence is DPKLLESKEEEEEEEEEEEEEEEEEEEEEEEEEEEESKEREKEK. Acidic residues predominate over residues 242-270; it reads KEEEEEEEEEEEEEEEEEEEEEEEEEEEE.

This Arabidopsis thaliana (Mouse-ear cress) protein is Putative F-box protein At1g47300.